We begin with the raw amino-acid sequence, 285 residues long: UPF0703 protein YcgQ (285 aa).

4 consecutive transmembrane segments (helical) span residues 4–24, 34–54, 89–109, and 210–230; these read LLVLMGFTFFFYHLHASGNLT, LSFIAIFLLAILTAVQAYLFI, LIYVVFLFPLVSGIFFPIATL, and FVLRFGIIHCIADSGVYGMLV.

It belongs to the UPF0703 family.

It localises to the cell membrane. The chain is UPF0703 protein YcgQ (ycgQ) from Bacillus subtilis (strain 168).